The following is a 132-amino-acid chain: Small ribosomal subunit protein uS8 (132 aa).

The protein belongs to the universal ribosomal protein uS8 family. In terms of assembly, part of the 30S ribosomal subunit. Contacts proteins S5 and S12.

In terms of biological role, one of the primary rRNA binding proteins, it binds directly to 16S rRNA central domain where it helps coordinate assembly of the platform of the 30S subunit. The polypeptide is Small ribosomal subunit protein uS8 (Streptococcus mutans serotype c (strain ATCC 700610 / UA159)).